Reading from the N-terminus, the 141-residue chain is Hemoglobin subunit alpha-2 (141 aa).

The region spanning 1 to 141 (VLTEDDKNHV…VCKDLVSKYR (141 aa)) is the Globin domain. Residue His-58 coordinates O2. Position 87 (His-87) interacts with heme b.

This sequence belongs to the globin family. In terms of assembly, the major hemoglobin component (HbIII) is a heterotetramer of two alpha-2 chains and two beta-1 chains. Red blood cells.

Functionally, involved in oxygen transport from the lung to the various peripheral tissues. This Varanus albigularis (White-throated monitor) protein is Hemoglobin subunit alpha-2.